The chain runs to 209 residues: 2-phospho-L-lactate guanylyltransferase (209 aa).

This sequence belongs to the CofC family. Homodimer.

It carries out the reaction (2S)-2-phospholactate + GTP + H(+) = (2S)-lactyl-2-diphospho-5'-guanosine + diphosphate. Its pathway is cofactor biosynthesis; coenzyme F420 biosynthesis. Functionally, guanylyltransferase that catalyzes the activation of (2S)-2-phospholactate (2-PL) as (2S)-lactyl-2-diphospho-5'-guanosine, via the condensation of 2-PL with GTP. It is involved in the biosynthesis of coenzyme F420, a hydride carrier cofactor. In Methanosphaerula palustris (strain ATCC BAA-1556 / DSM 19958 / E1-9c), this protein is 2-phospho-L-lactate guanylyltransferase.